The sequence spans 273 residues: HMP-PP phosphatase (273 aa).

Aspartate 8 (nucleophile) is an active-site residue. Residues aspartate 8, aspartate 10, and aspartate 212 each contribute to the Mg(2+) site.

Belongs to the HAD-like hydrolase superfamily. Cof family. Mg(2+) is required as a cofactor.

It carries out the reaction 4-amino-2-methyl-5-(diphosphooxymethyl)pyrimidine + H2O = 4-amino-2-methyl-5-(phosphooxymethyl)pyrimidine + phosphate + H(+). Its function is as follows. Catalyzes the hydrolysis of 4-amino-2-methyl-5-hydroxymethylpyrimidine pyrophosphate (HMP-PP) to 4-amino-2-methyl-5-hydroxymethylpyrimidine phosphate (HMP-P). The protein is HMP-PP phosphatase of Yersinia pseudotuberculosis serotype I (strain IP32953).